A 246-amino-acid chain; its full sequence is MQIDILSLFPEMFAGPLHESMIGNAIENDVINVDVTNFRDFTTDKHNHVDDYPYGGGAGMLLQPQPIFDALASVQEKHPAPGRVILLDPAGVQFNQHVAEDFAQEEHLTFICGHYEGYDERIRSLVTDEVSLGDYVLTGGELGAMVMIDATVRLLPGVLGNSESAPGDSFSSGLLEYPQYTRPADFRGMKVPDILLSGDHGKIDDWRLEQALKRTYERRPDMLTGLSLSGKAKQMLADIKADESEV.

Residues G113 and 132–137 (LGDYVL) contribute to the S-adenosyl-L-methionine site.

This sequence belongs to the RNA methyltransferase TrmD family. As to quaternary structure, homodimer.

Its subcellular location is the cytoplasm. The catalysed reaction is guanosine(37) in tRNA + S-adenosyl-L-methionine = N(1)-methylguanosine(37) in tRNA + S-adenosyl-L-homocysteine + H(+). Specifically methylates guanosine-37 in various tRNAs. The protein is tRNA (guanine-N(1)-)-methyltransferase of Lactiplantibacillus plantarum (strain ATCC BAA-793 / NCIMB 8826 / WCFS1) (Lactobacillus plantarum).